The primary structure comprises 292 residues: 2,3-dihydroxybenzoate decarboxylase (292 aa).

The active site involves Cys263.

This sequence belongs to the metallo-dependent hydrolases superfamily. As to quaternary structure, homotetramer.

It carries out the reaction 2,3-dihydroxybenzoate + H(+) = catechol + CO2. The protein operates within aromatic compound metabolism; benzoate degradation via hydroxylation. This is 2,3-dihydroxybenzoate decarboxylase from Aspergillus niger.